We begin with the raw amino-acid sequence, 279 residues long: Early nodulin-like protein 18 (279 aa).

The first 24 residues, Met1–Ala24, serve as a signal peptide directing secretion. The region spanning Thr25 to Ala133 is the Phytocyanin domain. Cysteines 82 and 121 form a disulfide. Residue Asn83 is glycosylated (N-linked (GlcNAc...) asparagine). A disordered region spans residues Arg138–Ala256. Residues Ala140–Ala168 are compositionally biased toward pro residues. Positions Pro169 to Pro185 are enriched in low complexity. Pro residues predominate over residues Ser186 to Ala199. Composition is skewed to low complexity over residues Ala212–Ala226 and Thr234–Ala256. N-linked (GlcNAc...) asparagine glycosylation occurs at Asn238. A lipid anchor (GPI-anchor amidated serine) is attached at Ser251. Positions Gly252–Ile279 are cleaved as a propeptide — removed in mature form.

This sequence belongs to the early nodulin-like (ENODL) family. As to expression, specifically expressed in reproductive tissues. Mainly observed in developing seeds and in mature leaves.

The protein localises to the cell membrane. Functionally, may act as a carbohydrate transporter. Promotes tolerance to salt stress in a redox-dependent manner. This Oryza sativa subsp. japonica (Rice) protein is Early nodulin-like protein 18.